The sequence spans 144 residues: Nucleoside diphosphate kinase (144 aa).

ATP is bound by residues Lys11, Phe59, Arg87, Thr93, Arg104, and Asn114. The active-site Pros-phosphohistidine intermediate is His117.

The protein belongs to the NDK family. Homotetramer. Mg(2+) serves as cofactor.

Its subcellular location is the cytoplasm. The catalysed reaction is a 2'-deoxyribonucleoside 5'-diphosphate + ATP = a 2'-deoxyribonucleoside 5'-triphosphate + ADP. It carries out the reaction a ribonucleoside 5'-diphosphate + ATP = a ribonucleoside 5'-triphosphate + ADP. Its function is as follows. Major role in the synthesis of nucleoside triphosphates other than ATP. The ATP gamma phosphate is transferred to the NDP beta phosphate via a ping-pong mechanism, using a phosphorylated active-site intermediate. The chain is Nucleoside diphosphate kinase from Coxiella burnetii (strain CbuG_Q212) (Coxiella burnetii (strain Q212)).